Reading from the N-terminus, the 404-residue chain is Probable thioredoxin reductase ARB_06224 (404 aa).

A signal peptide spans 1–22 (MGVQRLALALIAFTSALTSVIA). 67–75 (DEGIYRNGA) is an FAD binding site. Residues Cys172 and Cys175 are joined by a disulfide bond. The N-linked (GlcNAc...) asparagine glycan is linked to Asn213. 334-343 (DANNDGSTNG) contributes to the FAD binding site.

This sequence belongs to the class-II pyridine nucleotide-disulfide oxidoreductase family. Homodimer. Requires FAD as cofactor.

The protein resides in the secreted. It carries out the reaction [thioredoxin]-dithiol + NADP(+) = [thioredoxin]-disulfide + NADPH + H(+). The polypeptide is Probable thioredoxin reductase ARB_06224 (Arthroderma benhamiae (strain ATCC MYA-4681 / CBS 112371) (Trichophyton mentagrophytes)).